Reading from the N-terminus, the 368-residue chain is Ferrochelatase (368 aa).

Fe cation is bound by residues His-209 and Glu-290. Residues Ala-341–Gln-368 form a disordered region.

The protein belongs to the ferrochelatase family.

It is found in the cytoplasm. The catalysed reaction is heme b + 2 H(+) = protoporphyrin IX + Fe(2+). It functions in the pathway porphyrin-containing compound metabolism; protoheme biosynthesis; protoheme from protoporphyrin-IX: step 1/1. Functionally, catalyzes the ferrous insertion into protoporphyrin IX. The chain is Ferrochelatase from Nitrosococcus oceani (strain ATCC 19707 / BCRC 17464 / JCM 30415 / NCIMB 11848 / C-107).